The chain runs to 358 residues: Methionine aminopeptidase 2 (358 aa).

His-111 contacts substrate. The a divalent metal cation site is built by Asp-131, Asp-142, and His-211. His-219 contacts substrate. A divalent metal cation is bound by residues Glu-244 and Glu-339.

Belongs to the peptidase M24A family. Methionine aminopeptidase eukaryotic type 2 subfamily. It depends on Co(2+) as a cofactor. Requires Zn(2+) as cofactor. Mn(2+) serves as cofactor. Fe(2+) is required as a cofactor.

It localises to the cytoplasm. It catalyses the reaction Release of N-terminal amino acids, preferentially methionine, from peptides and arylamides.. Its function is as follows. Cotranslationally removes the N-terminal methionine from nascent proteins. The N-terminal methionine is often cleaved when the second residue in the primary sequence is small and uncharged (Met-Ala-, Cys, Gly, Pro, Ser, Thr, or Val). In Laccaria bicolor (strain S238N-H82 / ATCC MYA-4686) (Bicoloured deceiver), this protein is Methionine aminopeptidase 2.